We begin with the raw amino-acid sequence, 269 residues long: Tryptophan synthase alpha chain (269 aa).

Active-site proton acceptor residues include glutamate 49 and aspartate 60.

It belongs to the TrpA family. Tetramer of two alpha and two beta chains.

It catalyses the reaction (1S,2R)-1-C-(indol-3-yl)glycerol 3-phosphate + L-serine = D-glyceraldehyde 3-phosphate + L-tryptophan + H2O. It participates in amino-acid biosynthesis; L-tryptophan biosynthesis; L-tryptophan from chorismate: step 5/5. Its function is as follows. The alpha subunit is responsible for the aldol cleavage of indoleglycerol phosphate to indole and glyceraldehyde 3-phosphate. This chain is Tryptophan synthase alpha chain, found in Actinobacillus pleuropneumoniae serotype 7 (strain AP76).